The primary structure comprises 387 residues: Diphthine methyltransferase (387 aa).

5 WD repeats span residues N62–F102, E119–T159, P195–S237, I241–F286, and G357–V387.

It belongs to the DPH7 family. Interacts with CAN1 and RTT10.

It localises to the cytoplasm. It is found in the endosome. The catalysed reaction is diphthine methyl ester-[translation elongation factor 2] + H2O = diphthine-[translation elongation factor 2] + methanol + H(+). The protein operates within protein modification; peptidyl-diphthamide biosynthesis. In terms of biological role, catalyzes the demethylation of diphthine methyl ester to form diphthine, an intermediate in diphthamide biosynthesis, a post-translational modification of histidine which occurs in translation elongation factor 2 (EFT1 and EFT2). Also plays a role in the regulation of the retromer complex and is required for the recycling from endosomes of plasma membrane proteins like CAN1 and MUP1. Identified in a screen for mutants with decreased levels of rDNA transcription. The polypeptide is Diphthine methyltransferase (RRT2) (Saccharomyces cerevisiae (strain ATCC 204508 / S288c) (Baker's yeast)).